A 547-amino-acid chain; its full sequence is Ribosome protection protein VmlR (547 aa).

Positions 5–200 (VTLTNVSYEV…FREKKRLTQQ (196 aa)) constitute an ABC transporter 1 domain. 37–44 (GKNGAGKS) contributes to the ATP binding site. Residues 183–289 (GNYSGYMKFR…SIDTTHKTGK (107 aa)) are antibiotic resistance domain (ARD). Coiled-coil stretches lie at residues 193-222 (EKKR…GLAS) and 245-269 (AKRT…AKAE). The region spanning 292-504 (LEVQNVTKAF…REELRLKLET (213 aa)) is the ABC transporter 2 domain. 324–331 (GPNGSGKT) is a binding site for ATP. Residues 483-547 (KQLNDVPSER…KELDHQDKKD (65 aa)) are C-terminal extension (CTE). Positions 488-543 (VPSERNEREELRLKLETERQEVLGKLSFMTPNDKGYKELDQAFNELTKRIKELDHQ) form a coiled coil.

Belongs to the ABC transporter superfamily. ABCF family. ARE2 subfamily. Binds within the E-site of the 70S ribosome, where it contacts ribosomal proteins L1, L5, L33-1, S7, S11, the 16 and 23S rRNAs and the acceptor arm of the P-site tRNA.

Its subcellular location is the cytoplasm. In terms of biological role, recognizes and binds in the vacant E-site of ribosomes stalled by some peptidyltransferase center (PTC)-targeting antibiotics. Makes contact with the PTC and both ribosomal subunits. Induces conformational changes in the P-site, which allows it to dislodge the antibiotic from its PTC binding site. Binds to ribosomes either directly following translation initation or subsequent to E tRNA release during elongation. Involved in resistance to a narrow spectrum of antibiotics (the streptogramin A antibiotic virginiamycin M, the lincosamide antibiotic lincomycin and the pleuromutilin antibiotic tiamulin). This Bacillus subtilis (strain 168) protein is Ribosome protection protein VmlR.